The chain runs to 122 residues: Small ribosomal subunit protein bS6 (122 aa).

The interval 95–122 (AETAPSPMMKEVQREEAKKAAAQSEQAA) is disordered.

Belongs to the bacterial ribosomal protein bS6 family.

Functionally, binds together with bS18 to 16S ribosomal RNA. In Ralstonia nicotianae (strain ATCC BAA-1114 / GMI1000) (Ralstonia solanacearum), this protein is Small ribosomal subunit protein bS6.